Here is a 471-residue protein sequence, read N- to C-terminus: Siroheme synthase 1 (471 aa).

The tract at residues 1 to 203 (MDYLPLFAEL…GNSAEAEKAL (203 aa)) is precorrin-2 dehydrogenase /sirohydrochlorin ferrochelatase. Residues 22–23 (EI) and 43–44 (ET) contribute to the NAD(+) site. Position 128 is a phosphoserine (S128). The uroporphyrinogen-III C-methyltransferase stretch occupies residues 215 to 471 (GEIILVGAGP…GFNASVVNLA (257 aa)). Residue P224 coordinates S-adenosyl-L-methionine. D247 functions as the Proton acceptor in the catalytic mechanism. The active-site Proton donor is the K269. Residues 300-302 (GGD), I305, 330-331 (TA), M382, and G411 contribute to the S-adenosyl-L-methionine site.

The protein in the N-terminal section; belongs to the precorrin-2 dehydrogenase / sirohydrochlorin ferrochelatase family. In the C-terminal section; belongs to the precorrin methyltransferase family.

The catalysed reaction is uroporphyrinogen III + 2 S-adenosyl-L-methionine = precorrin-2 + 2 S-adenosyl-L-homocysteine + H(+). The enzyme catalyses precorrin-2 + NAD(+) = sirohydrochlorin + NADH + 2 H(+). It carries out the reaction siroheme + 2 H(+) = sirohydrochlorin + Fe(2+). Its pathway is cofactor biosynthesis; adenosylcobalamin biosynthesis; precorrin-2 from uroporphyrinogen III: step 1/1. The protein operates within cofactor biosynthesis; adenosylcobalamin biosynthesis; sirohydrochlorin from precorrin-2: step 1/1. It functions in the pathway porphyrin-containing compound metabolism; siroheme biosynthesis; precorrin-2 from uroporphyrinogen III: step 1/1. It participates in porphyrin-containing compound metabolism; siroheme biosynthesis; siroheme from sirohydrochlorin: step 1/1. Its pathway is porphyrin-containing compound metabolism; siroheme biosynthesis; sirohydrochlorin from precorrin-2: step 1/1. Multifunctional enzyme that catalyzes the SAM-dependent methylations of uroporphyrinogen III at position C-2 and C-7 to form precorrin-2 via precorrin-1. Then it catalyzes the NAD-dependent ring dehydrogenation of precorrin-2 to yield sirohydrochlorin. Finally, it catalyzes the ferrochelation of sirohydrochlorin to yield siroheme. The protein is Siroheme synthase 1 of Klebsiella pneumoniae subsp. pneumoniae (strain ATCC 700721 / MGH 78578).